The primary structure comprises 350 residues: Galactokinase (350 aa).

14-17 (EHTD) lines the substrate pocket. Residues serine 46 and 96–102 (GAGLSSS) each bind ATP. Mg(2+) contacts are provided by serine 102 and glutamate 134. Catalysis depends on aspartate 146, which acts as the Proton acceptor. Tyrosine 196 provides a ligand contact to substrate.

This sequence belongs to the GHMP kinase family. GalK subfamily.

It is found in the cytoplasm. The catalysed reaction is alpha-D-galactose + ATP = alpha-D-galactose 1-phosphate + ADP + H(+). Its pathway is carbohydrate metabolism; galactose metabolism. Catalyzes the transfer of the gamma-phosphate of ATP to D-galactose to form alpha-D-galactose-1-phosphate (Gal-1-P). The sequence is that of Galactokinase from Thermotoga neapolitana (strain ATCC 49049 / DSM 4359 / NBRC 107923 / NS-E).